The following is a 102-amino-acid chain: NADH-quinone oxidoreductase subunit K (102 aa).

The next 3 helical transmembrane spans lie at 6–26 (LTGF…GVLA), 30–50 (ILFQ…AFIA), and 63–83 (MFVL…ALFL).

This sequence belongs to the complex I subunit 4L family. In terms of assembly, NDH-1 is composed of 14 different subunits. Subunits NuoA, H, J, K, L, M, N constitute the membrane sector of the complex.

The protein localises to the cell inner membrane. The catalysed reaction is a quinone + NADH + 5 H(+)(in) = a quinol + NAD(+) + 4 H(+)(out). NDH-1 shuttles electrons from NADH, via FMN and iron-sulfur (Fe-S) centers, to quinones in the respiratory chain. The immediate electron acceptor for the enzyme in this species is believed to be ubiquinone. Couples the redox reaction to proton translocation (for every two electrons transferred, four hydrogen ions are translocated across the cytoplasmic membrane), and thus conserves the redox energy in a proton gradient. The protein is NADH-quinone oxidoreductase subunit K of Rhodopseudomonas palustris (strain BisA53).